The following is a 318-amino-acid chain: D-alanine--D-alanine ligase B (318 aa).

In terms of domain architecture, ATP-grasp spans 117 to 315 (KQVWLSLGLS…FEALVWRVLE (199 aa)). 146–201 (AEQIGLPVIVKPANEGSSVGVSRVFDQAQLDEAVTLAARYDGALLMEQLIEGDELT) provides a ligand contact to ATP. Asp268, Glu282, and Asn284 together coordinate Mg(2+).

Belongs to the D-alanine--D-alanine ligase family. It depends on Mg(2+) as a cofactor. Mn(2+) serves as cofactor.

The protein localises to the cytoplasm. It catalyses the reaction 2 D-alanine + ATP = D-alanyl-D-alanine + ADP + phosphate + H(+). Its pathway is cell wall biogenesis; peptidoglycan biosynthesis. Functionally, cell wall formation. In Xanthomonas campestris pv. campestris (strain ATCC 33913 / DSM 3586 / NCPPB 528 / LMG 568 / P 25), this protein is D-alanine--D-alanine ligase B.